The following is a 337-amino-acid chain: Hairy/enhancer-of-split related with YRPW motif protein 2 (337 aa).

Positions 1–52 (MKRPCEETTSESDMDETIDVGSENNYSGQSTSSVIRLNSPTTTSQIMARKKR) are disordered. Positions 8-18 (TTSESDMDETI) are enriched in acidic residues. A compositionally biased stretch (polar residues) spans 22-46 (SENNYSGQSTSSVIRLNSPTTTSQI). Residues 47 to 116 (MARKKRRGII…GGKGYFDAHA (70 aa)) form a transcriptional repression and interaction with NCOR1 and SIN3A region. The bHLH domain maps to 48–103 (ARKKRRGIIEKRRRDRINNSLSELRRLVPTAFEKQGSAKLEKAEILQMTVDHLKML). The Orange domain maps to 122–157 (MSIGFRECLTEVARYLSSVEGLDSSDPLRVRLVSHL). The segment covering 307-325 (LSVSATSSPQQTSSGTNNK) has biased composition (polar residues). A disordered region spans residues 307-337 (LSVSATSSPQQTSSGTNNKPYRPWGTEVGAF). The short motif at 327–330 (YRPW) is the YRPW motif element.

This sequence belongs to the HEY family. May self-associate. Interacts with GATA4, HES1 and HEYL. Interacts with HDAC1, NCOR1 and SIN3A. Interacts with ARNT and GATA6.

It is found in the nucleus. Downstream effector of Notch signaling which may be required for cardiovascular development. Transcriptional repressor which binds preferentially to the canonical E box sequence 5'-CACGTG-3'. Represses transcription by the cardiac transcriptional activators GATA4 and GATA6. This chain is Hairy/enhancer-of-split related with YRPW motif protein 2 (HEY2), found in Homo sapiens (Human).